A 394-amino-acid polypeptide reads, in one-letter code: Subtilisin-like protease 4 (394 aa).

A signal peptide spans 1–17 (CLKTLSVFLAAFAAADA). A propeptide spanning residues 18–116 (RAVFKTQGHK…VEQDQVVRIS (99 aa)) is cleaved from the precursor. An Inhibitor I9 domain is found at 36-115 (YIVVMKDGVS…YVEQDQVVRI (80 aa)). N100 is a glycosylation site (N-linked (GlcNAc...) asparagine). The 269-residue stretch at 126 to 394 (SWGLGRVSHR…STTNRLLYNG (269 aa)) folds into the Peptidase S8 domain. Active-site charge relay system residues include D158 and H189. Residues N250 and N306 are each glycosylated (N-linked (GlcNAc...) asparagine). The active-site Charge relay system is the S344.

The protein belongs to the peptidase S8 family.

It is found in the secreted. In terms of biological role, secreted subtilisin-like serine protease with keratinolytic activity that contributes to pathogenicity. The sequence is that of Subtilisin-like protease 4 (SUB4) from Trichophyton equinum (Horse ringworm fungus).